A 404-amino-acid polypeptide reads, in one-letter code: Argininosuccinate synthase (404 aa).

Residue 9-17 participates in ATP binding; the sequence is AYSGGLDTS. L-citrulline is bound at residue Tyr86. Residue Gly116 participates in ATP binding. Positions 118, 122, and 123 each coordinate L-aspartate. L-citrulline is bound at residue Asn122. The L-citrulline site is built by Arg126, Ser174, Ser183, Glu259, and Tyr271.

This sequence belongs to the argininosuccinate synthase family. Type 1 subfamily. Homotetramer.

The protein resides in the cytoplasm. The catalysed reaction is L-citrulline + L-aspartate + ATP = 2-(N(omega)-L-arginino)succinate + AMP + diphosphate + H(+). It functions in the pathway amino-acid biosynthesis; L-arginine biosynthesis; L-arginine from L-ornithine and carbamoyl phosphate: step 2/3. The protein is Argininosuccinate synthase of Listeria monocytogenes serovar 1/2a (strain ATCC BAA-679 / EGD-e).